Reading from the N-terminus, the 250-residue chain is MLNQIIARKKEHIQTLQLPDDGHFERRSFKEALVNTHRSIGLIAEVKKASPSKGIIQPNFDPLQTAKAYEKSNADCLSVLTDEPFFQGKNEYLSLIKKHIARPILRKDFIIDSIQIEESRRIGADAILLIGEVLEPQQLHELYIEAKEKGLDILVEVHAAETLEQILNLFTPEIIGVNNRNLKTFNTTVEQTKEIAPLVPKDCLLVSESGIQTFDDLTFVKKHGASAVLVGESLMREPSQEKAVQTLFGE.

Belongs to the TrpC family.

It carries out the reaction 1-(2-carboxyphenylamino)-1-deoxy-D-ribulose 5-phosphate + H(+) = (1S,2R)-1-C-(indol-3-yl)glycerol 3-phosphate + CO2 + H2O. Its pathway is amino-acid biosynthesis; L-tryptophan biosynthesis; L-tryptophan from chorismate: step 4/5. The protein is Indole-3-glycerol phosphate synthase of Bacillus pumilus (strain SAFR-032).